A 420-amino-acid polypeptide reads, in one-letter code: Glycogen synthase kinase-3 beta (420 aa).

A compositionally biased stretch (polar residues) spans 1-22 (MSGRPRTTSFAESCKPVQQPSA). The interval 1 to 53 (MSGRPRTTSFAESCKPVQQPSAFGSMKVSRDKDGSKVTTVVATPGQGPDRPQE) is disordered. Serine 9 carries the post-translational modification Phosphoserine; by PKB/AKT1, RPS6KA3 and SGK3. Cysteine 14 carries S-palmitoyl cysteine lipidation. Residues 56–340 (YTDTKVIGNG…PLEACAHSFF (285 aa)) form the Protein kinase domain. ATP is bound by residues 62–70 (IGNGSFGVV) and lysine 85. The active-site Proton acceptor is the aspartate 181. Tyrosine 216 bears the Phosphotyrosine mark. A disordered region spans residues 385–420 (QAAASPPANATAASDTNAGDRGQTNNAASASASNST). 2 stretches are compositionally biased toward low complexity: residues 386-401 (AAASPPANATAASDTN) and 409-420 (NNAASASASNST). At serine 389 the chain carries Phosphoserine.

It belongs to the protein kinase superfamily. CMGC Ser/Thr protein kinase family. GSK-3 subfamily. As to quaternary structure, monomer. Interacts with DAB2IP (via C2 domain); the interaction stimulates GSK3B kinase activation. Interacts (via C2 domain) with PPP2CA. Interacts with ARRB2, AXIN1, CABYR, DISC1, MMP2, MUC1, NIN, PRUNE1 and ZBED3. Interacts with AXIN1; the interaction mediates hyperphosphorylation of CTNNB1 leading to its ubiquitination and destruction. Interacts with and phosphorylates SNAI1. Interacts with DNM1L (via a C-terminal domain). Found in a complex composed of MACF1, APC, AXIN1, CTNNB1 and GSK3B. Interacts with SGK3. Interacts with the CLOCK-BMAL1 heterodimer. Interacts with the BMAL1. Interacts with CTNND2. The complex composed, at least, of APC, CTNNB1 and GSK3B interacts with JPT1; the interaction requires the inactive form of GSK3B (phosphorylated at 'Ser-9'). Forms a complex composed of PRKAR2A or PRKAR2B, GSK3B and GSKIP through GSKIP interaction; facilitates PKA-induced phosphorylation and regulates GSK3B activity. Interacts with GSKIP. Interacts with GID8. Interacts with PIWIL2. Interacts with LMBR1L. Interacts with DDX3X. Interacts with BIRC2. Interacts with TNFRSF10B; TNFRSF10B stimulation inhibits GSK3B kinase activity. Found in a complex with SLC39A6, SLC39A10 and with GSK3B that controls NCAM1 phosphorylation. Interacts with PKP3 (via ARM repeats); the interaction may be involved in PKP3 protein degradation. In terms of processing, phosphorylated by AKT1 and ILK1. Upon insulin-mediated signaling, the activated PKB/AKT1 and RPS6KA3 protein kinases phosphorylate and deactivate GSK3B, resulting in the dephosphorylation and activation of GYS1. Activated by phosphorylation at Tyr-216. Inactivated by phosphorylation at Ser-9. Phosphorylated in a circadian manner in the hippocampus. Post-translationally, mono-ADP-ribosylation by PARP10 negatively regulates kinase activity. Palmitoylated. Palmitoylation by ZDHHC4 prevents AKT1-mediated phosphorylation.

The protein localises to the cytoplasm. The protein resides in the nucleus. It is found in the membrane. Its subcellular location is the cell membrane. The enzyme catalyses L-seryl-[tau protein] + ATP = O-phospho-L-seryl-[tau protein] + ADP + H(+). The catalysed reaction is L-threonyl-[tau protein] + ATP = O-phospho-L-threonyl-[tau protein] + ADP + H(+). It catalyses the reaction L-seryl-[protein] + ATP = O-phospho-L-seryl-[protein] + ADP + H(+). It carries out the reaction L-threonyl-[protein] + ATP = O-phospho-L-threonyl-[protein] + ADP + H(+). With respect to regulation, activated by phosphorylation at Tyr-216. In response to insulin, inhibited by phosphorylation at Ser-9 by PKB/AKT1; phosphorylation at this site causes a conformational change, preventing access of substrates to the active site. Inhibited by IL22 treatment which also triggers phosphorylation at Ser-9, promoting inactivation. Inhibited by lithium. In terms of biological role, constitutively active protein kinase that acts as a negative regulator in the hormonal control of glucose homeostasis, Wnt signaling and regulation of transcription factors and microtubules, by phosphorylating and inactivating glycogen synthase (GYS1 or GYS2), EIF2B, CTNNB1/beta-catenin, APC, AXIN1, DPYSL2/CRMP2, JUN, NFATC1/NFATC, MAPT/TAU and MACF1. Requires primed phosphorylation of the majority of its substrates. In skeletal muscle, contributes to insulin regulation of glycogen synthesis by phosphorylating and inhibiting GYS1 activity and hence glycogen synthesis. May also mediate the development of insulin resistance by regulating activation of transcription factors. Regulates protein synthesis by controlling the activity of initiation factor 2B (EIF2BE/EIF2B5) in the same manner as glycogen synthase. In Wnt signaling, GSK3B forms a multimeric complex with APC, AXIN1 and CTNNB1/beta-catenin and phosphorylates the N-terminus of CTNNB1 leading to its degradation mediated by ubiquitin/proteasomes. Phosphorylates JUN at sites proximal to its DNA-binding domain, thereby reducing its affinity for DNA. Phosphorylates NFATC1/NFATC on conserved serine residues promoting NFATC1/NFATC nuclear export, shutting off NFATC1/NFATC gene regulation, and thereby opposing the action of calcineurin. Phosphorylates MAPT/TAU on 'Thr-548', decreasing significantly MAPT/TAU ability to bind and stabilize microtubules. MAPT/TAU is the principal component of neurofibrillary tangles in Alzheimer disease. Plays an important role in ERBB2-dependent stabilization of microtubules at the cell cortex. Phosphorylates MACF1, inhibiting its binding to microtubules which is critical for its role in bulge stem cell migration and skin wound repair. Probably regulates NF-kappa-B (NFKB1) at the transcriptional level and is required for the NF-kappa-B-mediated anti-apoptotic response to TNF-alpha (TNF/TNFA). Negatively regulates replication in pancreatic beta-cells, resulting in apoptosis, loss of beta-cells and diabetes. Through phosphorylation of the anti-apoptotic protein MCL1, may control cell apoptosis in response to growth factors deprivation. Phosphorylates MUC1 in breast cancer cells, decreasing the interaction of MUC1 with CTNNB1/beta-catenin. Is necessary for the establishment of neuronal polarity and axon outgrowth. Phosphorylates MARK2, leading to inhibition of its activity. Phosphorylates SIK1 at 'Thr-182', leading to sustainment of its activity. Phosphorylates ZC3HAV1 which enhances its antiviral activity. Phosphorylates SNAI1, leading to its ubiquitination and proteasomal degradation. Phosphorylates SFPQ at 'Thr-687' upon T-cell activation. Phosphorylates NR1D1 st 'Ser-55' and 'Ser-59' and stabilizes it by protecting it from proteasomal degradation. Regulates the circadian clock via phosphorylation of the major clock components including BMAL1, CLOCK and PER2. Phosphorylates CLOCK AT 'Ser-427' and targets it for proteasomal degradation. Phosphorylates BMAL1 at 'Ser-17' and 'Ser-21' and primes it for ubiquitination and proteasomal degradation. Phosphorylates FBXL2 at 'Thr-404' and primes it for ubiquitination by the SCF(FBXO3) complex and proteasomal degradation. Phosphorylates OGT at 'Ser-3' or 'Ser-4' which positively regulates its activity. Phosphorylates MYCN in neuroblastoma cells which may promote its degradation. Regulates the circadian rhythmicity of hippocampal long-term potentiation and BMAL1 and PER2 expression. Acts as a regulator of autophagy by mediating phosphorylation of KAT5/TIP60 under starvation conditions, activating KAT5/TIP60 acetyltransferase activity and promoting acetylation of key autophagy regulators, such as ULK1 and RUBCNL/Pacer. Negatively regulates extrinsic apoptotic signaling pathway via death domain receptors. Promotes the formation of an anti-apoptotic complex, made of DDX3X, BRIC2 and GSK3B, at death receptors, including TNFRSF10B. The anti-apoptotic function is most effective with weak apoptotic signals and can be overcome by stronger stimulation. Phosphorylates E2F1, promoting the interaction between E2F1 and USP11, stabilizing E2F1 and promoting its activity. Phosphorylates mTORC2 complex component RICTOR at 'Ser-1235' in response to endoplasmic stress, inhibiting mTORC2. Phosphorylates FXR1, promoting FXR1 ubiquitination by the SCF(FBXO4) complex and FXR1 degradation by the proteasome. Phosphorylates interleukin-22 receptor subunit IL22RA1, preventing its proteasomal degradation. This Rattus norvegicus (Rat) protein is Glycogen synthase kinase-3 beta.